Here is a 257-residue protein sequence, read N- to C-terminus: Pyridoxine 5'-phosphate synthase (257 aa).

Asn-6 contacts 3-amino-2-oxopropyl phosphate. 8 to 9 (DH) lines the 1-deoxy-D-xylulose 5-phosphate pocket. 3-amino-2-oxopropyl phosphate is bound at residue Arg-17. Catalysis depends on His-42, which acts as the Proton acceptor. The 1-deoxy-D-xylulose 5-phosphate site is built by Arg-44 and His-49. Catalysis depends on Glu-69, which acts as the Proton acceptor. Thr-99 lines the 1-deoxy-D-xylulose 5-phosphate pocket. The active-site Proton donor is His-211. 3-amino-2-oxopropyl phosphate contacts are provided by residues Gly-212 and 233–234 (GQ).

The protein belongs to the PNP synthase family. In terms of assembly, homooctamer; tetramer of dimers.

The protein localises to the cytoplasm. The catalysed reaction is 3-amino-2-oxopropyl phosphate + 1-deoxy-D-xylulose 5-phosphate = pyridoxine 5'-phosphate + phosphate + 2 H2O + H(+). It functions in the pathway cofactor biosynthesis; pyridoxine 5'-phosphate biosynthesis; pyridoxine 5'-phosphate from D-erythrose 4-phosphate: step 5/5. Catalyzes the complicated ring closure reaction between the two acyclic compounds 1-deoxy-D-xylulose-5-phosphate (DXP) and 3-amino-2-oxopropyl phosphate (1-amino-acetone-3-phosphate or AAP) to form pyridoxine 5'-phosphate (PNP) and inorganic phosphate. This is Pyridoxine 5'-phosphate synthase from Campylobacter hominis (strain ATCC BAA-381 / DSM 21671 / CCUG 45161 / LMG 19568 / NCTC 13146 / CH001A).